A 347-amino-acid polypeptide reads, in one-letter code: MRQTIYLTVNLMQNWVERWILDWANILTWKTLCHQTKIGLPNGAQAFVSAQTSTIPKTAFTAHDFVDYTLPQEQKGKEQKEQQWMKNSQTKDTDVHPYADFAVLEILLFPDSSTDRKIFNHFIQPAIRAYKQLGDSLNIFANQTLDQPKHNRYYLLGYPFLRNKAASLFLNQTEQRKEHMDKTTQILHEKPFVVLTDPAKPTLIRNKGANFTGNTWTSNYDLSKKSGLYHKFLGKKYQIYGKSIVISDLNLSSGSSGSLLLNDRKQIVGIYFGVDGPKDELGFSQLLRWQAKNNDEEKDSVAYDLIFGNKNTTKYYAQFAKEHKTHLYEQIDRSNDQQFTFVKNQKC.

The protein belongs to the MG067/MG068/MG395 family.

This is an uncharacterized protein from Mycoplasma pneumoniae (strain ATCC 29342 / M129 / Subtype 1) (Mycoplasmoides pneumoniae).